Here is a 177-residue protein sequence, read N- to C-terminus: Large ribosomal subunit protein uL6 (177 aa).

This sequence belongs to the universal ribosomal protein uL6 family. As to quaternary structure, part of the 50S ribosomal subunit.

This protein binds to the 23S rRNA, and is important in its secondary structure. It is located near the subunit interface in the base of the L7/L12 stalk, and near the tRNA binding site of the peptidyltransferase center. This Rhizorhabdus wittichii (strain DSM 6014 / CCUG 31198 / JCM 15750 / NBRC 105917 / EY 4224 / RW1) (Sphingomonas wittichii) protein is Large ribosomal subunit protein uL6.